An 875-amino-acid polypeptide reads, in one-letter code: Alanine--tRNA ligase (875 aa).

Zn(2+) contacts are provided by His-564, His-568, Cys-666, and His-670.

This sequence belongs to the class-II aminoacyl-tRNA synthetase family. Homotetramer. Zn(2+) is required as a cofactor.

It is found in the cytoplasm. It catalyses the reaction tRNA(Ala) + L-alanine + ATP = L-alanyl-tRNA(Ala) + AMP + diphosphate. Catalyzes the attachment of alanine to tRNA(Ala) in a two-step reaction: alanine is first activated by ATP to form Ala-AMP and then transferred to the acceptor end of tRNA(Ala). Also edits incorrectly charged Ser-tRNA(Ala) and Gly-tRNA(Ala) via its editing domain. This is Alanine--tRNA ligase from Citrobacter koseri (strain ATCC BAA-895 / CDC 4225-83 / SGSC4696).